The sequence spans 684 residues: Acetophenone carboxylase delta subunit (684 aa).

It belongs to the oxoprolinase family. In terms of assembly, acetophenone carboxylase consists of five subunits; a heterooctameric subcomplex of two alpha (Apc1), two beta (Apc2), two gamma (Apc3) and two delta (Apc4) subunits assembles with the epsilon (Apc5) subunit in an unknown stoichiometry. It depends on Mg(2+) as a cofactor. Mn(2+) is required as a cofactor.

Its subcellular location is the cytoplasm. It carries out the reaction acetophenone + hydrogencarbonate + 2 ATP + H2O = 3-oxo-3-phenylpropanoate + 2 ADP + 2 phosphate + 2 H(+). Its activity is regulated as follows. Inhibited by zinc ions, carbamoylphosphate and beta,gamma-imido-ATP. Its function is as follows. Catalyzes the carboxylation of acetophenone to form 3-oxo-3-phenylpropanoate (benzoylacetate) in the anaerobic catabolism of ethylbenzene. Also carboxylates propiophenone at the same rate and 4-acetyl-pyridine at lower rates. The chain is Acetophenone carboxylase delta subunit (apc4) from Aromatoleum aromaticum (strain DSM 19018 / LMG 30748 / EbN1) (Azoarcus sp. (strain EbN1)).